Reading from the N-terminus, the 305-residue chain is UPF0282 protein Pisl_0021 (305 aa).

This sequence belongs to the UPF0282 family.

This Pyrobaculum islandicum (strain DSM 4184 / JCM 9189 / GEO3) protein is UPF0282 protein Pisl_0021.